We begin with the raw amino-acid sequence, 498 residues long: Polyphosphate:AMP phosphotransferase (498 aa).

2 PPK2 regions span residues 11–234 (IDDD…MQAA) and 269–491 (LSKE…LEKA).

It belongs to the polyphosphate kinase 2 (PPK2) family. Class II subfamily.

It catalyses the reaction [phosphate](n) + ADP = [phosphate](n+1) + AMP. Uses inorganic polyphosphate (polyP) as a donor to convert AMP to ADP. Can also convert GMP to GDP, with lower efficiency. This is Polyphosphate:AMP phosphotransferase from Pseudomonas syringae pv. tomato (strain ATCC BAA-871 / DC3000).